Consider the following 324-residue polypeptide: 7,8-didemethyl-8-hydroxy-5-deazariboflavin synthase (324 aa).

Residues 4-239 enclose the Radical SAM core domain; the sequence is VTYSKNVFIP…QEVAIQIPPN (236 aa). The [4Fe-4S] cluster site is built by cysteine 18, cysteine 22, and cysteine 25.

The protein belongs to the radical SAM superfamily. CofG family. Consists of two subunits, CofG and CofH. It depends on [4Fe-4S] cluster as a cofactor.

It catalyses the reaction 5-amino-5-(4-hydroxybenzyl)-6-(D-ribitylimino)-5,6-dihydrouracil + S-adenosyl-L-methionine = 7,8-didemethyl-8-hydroxy-5-deazariboflavin + 5'-deoxyadenosine + L-methionine + NH4(+) + H(+). The protein operates within cofactor biosynthesis; coenzyme F0 biosynthesis. Functionally, catalyzes the radical-mediated synthesis of 7,8-didemethyl-8-hydroxy-5-deazariboflavin from 5-amino-5-(4-hydroxybenzyl)-6-(D-ribitylimino)-5,6-dihydrouracil. This is 7,8-didemethyl-8-hydroxy-5-deazariboflavin synthase from Archaeoglobus fulgidus (strain ATCC 49558 / DSM 4304 / JCM 9628 / NBRC 100126 / VC-16).